We begin with the raw amino-acid sequence, 284 residues long: Ribosomal RNA small subunit methyltransferase A (284 aa).

S-adenosyl-L-methionine-binding residues include H12, L14, G47, E68, D93, and N118.

This sequence belongs to the class I-like SAM-binding methyltransferase superfamily. rRNA adenine N(6)-methyltransferase family. RsmA subfamily.

It is found in the cytoplasm. The catalysed reaction is adenosine(1518)/adenosine(1519) in 16S rRNA + 4 S-adenosyl-L-methionine = N(6)-dimethyladenosine(1518)/N(6)-dimethyladenosine(1519) in 16S rRNA + 4 S-adenosyl-L-homocysteine + 4 H(+). Specifically dimethylates two adjacent adenosines (A1518 and A1519) in the loop of a conserved hairpin near the 3'-end of 16S rRNA in the 30S particle. May play a critical role in biogenesis of 30S subunits. This chain is Ribosomal RNA small subunit methyltransferase A, found in Synechocystis sp. (strain ATCC 27184 / PCC 6803 / Kazusa).